The sequence spans 191 residues: NF-kappa-B inhibitor-interacting Ras-like protein 2 (191 aa).

Residues 1 to 191 (MGKSCKVVVC…KNKGSGSLDG (191 aa)) are small GTPase-like. 11-18 (GQASVGKT) contacts GTP. Residues 35 to 43 (MIETQEDIY) carry the Effector region motif. GTP-binding positions include 61–65 (DTRGL) and 120–123 (NKCD). The disordered stretch occupies residues 169–191 (TQPQSKSAFPLSRKNKGSGSLDG).

It belongs to the small GTPase superfamily. Ras family. KappaB-Ras subfamily. In terms of assembly, interacts with both NF-kappa-B inhibitor alpha (NFKBIA) and beta (NFKBIB) in vitro. However, it probably only interacts with NFKBIB in vivo. Interacts with GFOD1.

The protein resides in the cytoplasm. In terms of biological role, atypical Ras-like protein that acts as a potent regulator of NF-kappa-B activity by preventing the degradation of NF-kappa-B inhibitor beta (NFKBIB) by most signals, explaining why NFKBIB is more resistant to degradation. May act by blocking phosphorylation of NFKBIB and nuclear localization of p65/RELA NF-kappa-B subunit. It is unclear whether it acts as a GTPase. Both GTP- and GDP-bound forms block phosphorylation of NFKBIB. The protein is NF-kappa-B inhibitor-interacting Ras-like protein 2 (Nkiras2) of Mus musculus (Mouse).